A 332-amino-acid chain; its full sequence is Glycerol-3-phosphate dehydrogenase [NAD(P)+] (332 aa).

NADPH contacts are provided by Trp-13, Arg-33, and Lys-105. Sn-glycerol 3-phosphate is bound by residues Lys-105, Gly-134, and Ser-136. Residue Ala-138 coordinates NADPH. Positions 189, 242, 252, 253, and 254 each coordinate sn-glycerol 3-phosphate. Catalysis depends on Lys-189, which acts as the Proton acceptor. Arg-253 contributes to the NADPH binding site. Glu-279 provides a ligand contact to NADPH.

This sequence belongs to the NAD-dependent glycerol-3-phosphate dehydrogenase family.

Its subcellular location is the cytoplasm. It carries out the reaction sn-glycerol 3-phosphate + NAD(+) = dihydroxyacetone phosphate + NADH + H(+). It catalyses the reaction sn-glycerol 3-phosphate + NADP(+) = dihydroxyacetone phosphate + NADPH + H(+). Its pathway is membrane lipid metabolism; glycerophospholipid metabolism. Its function is as follows. Catalyzes the reduction of the glycolytic intermediate dihydroxyacetone phosphate (DHAP) to sn-glycerol 3-phosphate (G3P), the key precursor for phospholipid synthesis. This chain is Glycerol-3-phosphate dehydrogenase [NAD(P)+], found in Halorhodospira halophila (strain DSM 244 / SL1) (Ectothiorhodospira halophila (strain DSM 244 / SL1)).